Reading from the N-terminus, the 407-residue chain is Ribosomal protein uL3-like (407 aa).

Positions 1 to 31 (MSHRKFSAPRHGHLGFLPHKRSHRHRGKVKT) are enriched in basic residues. Disordered regions lie at residues 1-35 (MSHRKFSAPRHGHLGFLPHKRSHRHRGKVKTWPRD) and 387-407 (AFMGPQKKHLEKETPETSGDL).

Belongs to the universal ribosomal protein uL3 family. As to quaternary structure, component of the large ribosomal subunit in striated muscle cells.

Heart- and skeletal muscle-specific component of the ribosome, which regulates muscle function. Component of the large ribosomal subunit in striated muscle cells: replaces the RPL3 paralog in the ribosome in these cells. The ribosome is a large ribonucleoprotein complex responsible for the synthesis of proteins in the cell. Inhibits myotube growth and muscle function. The sequence is that of Ribosomal protein uL3-like from Homo sapiens (Human).